A 189-amino-acid chain; its full sequence is Peptidyl-tRNA hydrolase (189 aa).

A tRNA-binding site is contributed by tyrosine 14. Residue histidine 19 is the Proton acceptor of the active site. TRNA-binding residues include tyrosine 64, asparagine 66, and asparagine 112.

It belongs to the PTH family. Monomer.

It localises to the cytoplasm. It catalyses the reaction an N-acyl-L-alpha-aminoacyl-tRNA + H2O = an N-acyl-L-amino acid + a tRNA + H(+). In terms of biological role, hydrolyzes ribosome-free peptidyl-tRNAs (with 1 or more amino acids incorporated), which drop off the ribosome during protein synthesis, or as a result of ribosome stalling. Catalyzes the release of premature peptidyl moieties from peptidyl-tRNA molecules trapped in stalled 50S ribosomal subunits, and thus maintains levels of free tRNAs and 50S ribosomes. This chain is Peptidyl-tRNA hydrolase, found in Dehalococcoides mccartyi (strain ATCC BAA-2266 / KCTC 15142 / 195) (Dehalococcoides ethenogenes (strain 195)).